Consider the following 55-residue polypeptide: Large ribosomal subunit protein bL33 (55 aa).

This sequence belongs to the bacterial ribosomal protein bL33 family.

The protein is Large ribosomal subunit protein bL33 of Rhizobium johnstonii (strain DSM 114642 / LMG 32736 / 3841) (Rhizobium leguminosarum bv. viciae).